We begin with the raw amino-acid sequence, 3073 residues long: Adhesion G-protein coupled receptor G4 (3073 aa).

Residues 1-25 (MRKHILHQRLCGLILVSSFIFLTDS) form the signal peptide. Residues 26–2691 (LSLKGKRLDF…RSTVDAVNER (2666 aa)) are Extracellular-facing. Residues 29-228 (KGKRLDFYGE…SPTVDRRLRC (200 aa)) form the Pentraxin (PTX) domain. 2 disulfide bridges follow: C58–C123 and C200–C228. A glycan (N-linked (GlcNAc...) asparagine) is linked at N233. The segment at 253 to 272 (SQTTGLNPHKTSHSSTLLPE) is disordered. A glycan (N-linked (GlcNAc...) asparagine) is linked at N662. Polar residues-rich tracts occupy residues 671-696 (GNAT…ESKV) and 929-951 (GNSA…SSST). 2 disordered regions span residues 671–697 (GNAT…SKVT) and 924–951 (SEKS…SSST). N1141, N1304, and N1495 each carry an N-linked (GlcNAc...) asparagine glycan. Disordered stretches follow at residues 1565 to 1595 (FTSS…AGPT), 1741 to 1760 (TLTN…STPT), and 1945 to 1972 (ITLS…SDSR). Residues 1945–1954 (ITLSSNPSVN) show a composition bias toward polar residues. The span at 1955 to 1972 (SRATSPTWSSSSLPSDSR) shows a compositional bias: low complexity. Residues 2535-2684 (SSEEVIAPQI…GVLMDLSRST (150 aa)) form the GAIN-B domain. Disulfide bonds link C2635–C2666 and C2654–C2668. A GPS region spans residues 2635–2684 (CAFWDFDTNNGLGGWNPSGCKLKESNINYTICQCNHLTHFGVLMDLSRST). Residues 2673-2684 (HFGVLMDLSRST) are stachel. The chain crosses the membrane as a helical span at residues 2692–2712 (ILVIITYTGCGISSIFLGIAM). Over 2713–2728 (VTYIAFHKLRKDYPSK) the chain is Cytoplasmic. A helical membrane pass occupies residues 2729–2749 (ILINLCTALLMLNLAFLVNSW). Over 2750–2755 (LTSFQK) the chain is Extracellular. Residues 2756–2776 (VGLCITAAVALHYFLLVSLTW) traverse the membrane as a helical segment. A disulfide bond links C2759 and C2836. Over 2777 to 2798 (MGLEAVHMYFALVKVFNTYIPN) the chain is Cytoplasmic. A helical membrane pass occupies residues 2799 to 2819 (YILKFCLAGWGIPAITVAIIL). The Extracellular segment spans residues 2820–2842 (SVRKDLYGTLSPTTPFCWIKDDH). A helical transmembrane segment spans residues 2843 to 2863 (IFYISVVAYFCLIFLMNLSMF). The Cytoplasmic portion of the chain corresponds to 2864 to 2892 (CTVLVQLTSVKSQSQKTRKKMILNDLKGT). A helical membrane pass occupies residues 2893 to 2913 (ISLTFLLGLTWGFAFFAWGPV). Position 2914 (R2914) is a topological domain, extracellular. A helical transmembrane segment spans residues 2915–2935 (IFFLYLFAICNTLQGFLIFVF). Residues 2936–3073 (YCVMKESVRE…SSGLGEMFNL (138 aa)) are Cytoplasmic-facing.

Belongs to the G-protein coupled receptor 2 family. Adhesion G-protein coupled receptor (ADGR) subfamily. In terms of assembly, homodimer; homodimerizes via its Pentraxin domain in a calcium-independent manner. Heterodimer of 2 chains generated by proteolytic processing; the large extracellular N-terminal fragment and the membrane-bound C-terminal fragment predominantly remain associated and non-covalently linked. In terms of processing, autoproteolytically processed at the GPS region of the GAIN-B domain; this cleavage modulates receptor activity.

It is found in the membrane. With respect to regulation, forms a heterodimer of 2 chains generated by proteolytic processing that remain associated through non-covalent interactions mediated by the GAIN-B domain. In the inactivated receptor, the Stachel sequence (also named stalk) is embedded in the GAIN-B domain, where it adopts a beta-strand conformation. On activation, the Stachel moves into the 7 transmembrane region and adopts a twisted hook-shaped configuration that forms contacts within the receptor, leading to coupling of a G-alpha protein, which activates signaling. The cleaved GAIN-B and N-terminal domains can then dissociate from the rest of the receptor. Its function is as follows. Orphan adhesion G-protein coupled receptor (aGPCR). Ligand binding causes a conformation change that triggers signaling via guanine nucleotide-binding proteins (G proteins) and modulates the activity of downstream effectors, such as adenylate cyclase. ADGRG4 is coupled to G(s) G proteins and mediates activation of adenylate cyclase activity. May be act as sensor of mechanical forces. The sequence is that of Adhesion G-protein coupled receptor G4 from Mus musculus (Mouse).